The sequence spans 73 residues: Translation initiation factor IF-1 (73 aa).

Residues methionine 1–lysine 73 form the S1-like domain.

This sequence belongs to the IF-1 family. As to quaternary structure, component of the 30S ribosomal translation pre-initiation complex which assembles on the 30S ribosome in the order IF-2 and IF-3, IF-1 and N-formylmethionyl-tRNA(fMet); mRNA recruitment can occur at any time during PIC assembly.

It localises to the cytoplasm. One of the essential components for the initiation of protein synthesis. Stabilizes the binding of IF-2 and IF-3 on the 30S subunit to which N-formylmethionyl-tRNA(fMet) subsequently binds. Helps modulate mRNA selection, yielding the 30S pre-initiation complex (PIC). Upon addition of the 50S ribosomal subunit IF-1, IF-2 and IF-3 are released leaving the mature 70S translation initiation complex. This chain is Translation initiation factor IF-1, found in Arthrobacter sp. (strain FB24).